Reading from the N-terminus, the 399-residue chain is Tryptophan synthase beta chain (399 aa).

The residue at position 92 (Lys92) is an N6-(pyridoxal phosphate)lysine.

The protein belongs to the TrpB family. Tetramer of two alpha and two beta chains. Requires pyridoxal 5'-phosphate as cofactor.

The enzyme catalyses (1S,2R)-1-C-(indol-3-yl)glycerol 3-phosphate + L-serine = D-glyceraldehyde 3-phosphate + L-tryptophan + H2O. The protein operates within amino-acid biosynthesis; L-tryptophan biosynthesis; L-tryptophan from chorismate: step 5/5. Functionally, the beta subunit is responsible for the synthesis of L-tryptophan from indole and L-serine. The polypeptide is Tryptophan synthase beta chain (Bordetella pertussis (strain Tohama I / ATCC BAA-589 / NCTC 13251)).